A 261-amino-acid chain; its full sequence is Cytochrome c oxidase subunit 3 (261 aa).

At 1-15 (MTHQTHAYHMVNPSP) the chain is on the mitochondrial matrix side. The chain crosses the membrane as a helical span at residues 16 to 34 (WPLTGALSALLLTSGLIMW). Over 35-40 (FHFNSF) the chain is Mitochondrial intermembrane. The chain crosses the membrane as a helical span at residues 41 to 66 (LLVIIGLTCMLLTMYQWWRDIVREGT). Residues 67-72 (FQGHHT) are Mitochondrial matrix-facing. Residues 73 to 105 (PVVQKGLRYGMVLFIVSEVFFFLGFFWAFYHSS) traverse the membrane as a helical segment. The Mitochondrial intermembrane portion of the chain corresponds to 106–128 (LAPTPELGGCWPPTGIHPLNPLE). The chain crosses the membrane as a helical span at residues 129 to 152 (VPLLNTSILLASGVSITWAHHSLM). At 153-155 (EGN) the chain is on the mitochondrial matrix side. Residues 156 to 183 (RKQMIQALSITILLGIYFTILQASEYYE) traverse the membrane as a helical segment. Residues 184 to 190 (SSFTISD) are Mitochondrial intermembrane-facing. Residues 191–223 (GVYGSTFFVATGFHGLHVIIGTTFLIVCLLRQF) traverse the membrane as a helical segment. Residues 224 to 232 (NFHFTSTHH) are Mitochondrial matrix-facing. A helical membrane pass occupies residues 233–256 (FGFEAAAWYWHFVDVVWLFLYVSI). Residues 257-261 (YWWGS) lie on the Mitochondrial intermembrane side of the membrane.

Belongs to the cytochrome c oxidase subunit 3 family. As to quaternary structure, component of the cytochrome c oxidase (complex IV, CIV), a multisubunit enzyme composed of 14 subunits. The complex is composed of a catalytic core of 3 subunits MT-CO1, MT-CO2 and MT-CO3, encoded in the mitochondrial DNA, and 11 supernumerary subunits COX4I, COX5A, COX5B, COX6A, COX6B, COX6C, COX7A, COX7B, COX7C, COX8 and NDUFA4, which are encoded in the nuclear genome. The complex exists as a monomer or a dimer and forms supercomplexes (SCs) in the inner mitochondrial membrane with NADH-ubiquinone oxidoreductase (complex I, CI) and ubiquinol-cytochrome c oxidoreductase (cytochrome b-c1 complex, complex III, CIII), resulting in different assemblies (supercomplex SCI(1)III(2)IV(1) and megacomplex MCI(2)III(2)IV(2)).

It is found in the mitochondrion inner membrane. The catalysed reaction is 4 Fe(II)-[cytochrome c] + O2 + 8 H(+)(in) = 4 Fe(III)-[cytochrome c] + 2 H2O + 4 H(+)(out). Its function is as follows. Component of the cytochrome c oxidase, the last enzyme in the mitochondrial electron transport chain which drives oxidative phosphorylation. The respiratory chain contains 3 multisubunit complexes succinate dehydrogenase (complex II, CII), ubiquinol-cytochrome c oxidoreductase (cytochrome b-c1 complex, complex III, CIII) and cytochrome c oxidase (complex IV, CIV), that cooperate to transfer electrons derived from NADH and succinate to molecular oxygen, creating an electrochemical gradient over the inner membrane that drives transmembrane transport and the ATP synthase. Cytochrome c oxidase is the component of the respiratory chain that catalyzes the reduction of oxygen to water. Electrons originating from reduced cytochrome c in the intermembrane space (IMS) are transferred via the dinuclear copper A center (CU(A)) of subunit 2 and heme A of subunit 1 to the active site in subunit 1, a binuclear center (BNC) formed by heme A3 and copper B (CU(B)). The BNC reduces molecular oxygen to 2 water molecules using 4 electrons from cytochrome c in the IMS and 4 protons from the mitochondrial matrix. This is Cytochrome c oxidase subunit 3 (MT-CO3) from Osphranter robustus (Wallaroo).